A 385-amino-acid polypeptide reads, in one-letter code: Protein pelota homolog (385 aa).

Lys162 is covalently cross-linked (Glycyl lysine isopeptide (Lys-Gly) (interchain with G-Cter in SUMO2)). A phosphoserine mark is found at Ser374, Ser380, Ser381, and Ser382.

The protein belongs to the eukaryotic release factor 1 family. Pelota subfamily. In terms of assembly, component of the Pelota-HBS1L complex, also named Dom34-Hbs1 complex, composed of PELO and HBS1L. Interacts with PINK1. Interacts with ABCE1. Interacts with CNOT4. A divalent metal cation is required as a cofactor.

It localises to the cytoplasm. Functionally, component of the Pelota-HBS1L complex, a complex that recognizes stalled ribosomes and triggers the No-Go Decay (NGD) pathway. In the Pelota-HBS1L complex, PELO recognizes ribosomes stalled at the 3' end of an mRNA and engages stalled ribosomes by destabilizing mRNA in the mRNA channel. Following mRNA extraction from stalled ribosomes by the SKI complex, the Pelota-HBS1L complex promotes recruitment of ABCE1, which drives the disassembly of stalled ribosomes, followed by degradation of damaged mRNAs as part of the NGD pathway. As part of the PINK1-regulated signaling, upon mitochondrial damage is recruited to the ribosome/mRNA-ribonucleoprotein complex associated to mitochondrial outer membrane thereby enabling the recruitment of autophagy receptors and induction of mitophagy. The chain is Protein pelota homolog (PELO) from Pongo abelii (Sumatran orangutan).